The sequence spans 110 residues: Auxin-responsive protein SAUR71 (110 aa).

Belongs to the ARG7 family. Highly expressed in the steles of roots and hypocotyls.

It localises to the cytoplasm. In terms of biological role, plays a role in the regulation of cell expansion, root meristem patterning and auxin transport. The protein is Auxin-responsive protein SAUR71 of Arabidopsis thaliana (Mouse-ear cress).